Reading from the N-terminus, the 218-residue chain is 1-Cys peroxiredoxin PER1 (218 aa).

The Thioredoxin domain occupies 4–164; that stretch reads LTIGDTVPNL…VVRAVDSLLT (161 aa). Catalysis depends on C46, which acts as the Cysteine sulfenic acid (-SOH) intermediate. Positions 194–217 match the Bipartite nuclear localization signal motif; that stretch reads KKMFPQGFETADLPSKKGYLRFTK.

The protein belongs to the peroxiredoxin family. Prx6 subfamily. As to expression, embryo and aleurone cells.

It localises to the nucleus. It is found in the cytoplasm. The enzyme catalyses a hydroperoxide + [thioredoxin]-dithiol = an alcohol + [thioredoxin]-disulfide + H2O. In terms of biological role, thiol-specific peroxidase that catalyzes the reduction of hydrogen peroxide and organic hydroperoxides to water and alcohols, respectively. Seems to contribute to the inhibition of germination during stress. This is 1-Cys peroxiredoxin PER1 (PER1) from Hordeum vulgare (Barley).